The sequence spans 170 residues: MQLDEQRLRFRDAMASLSPAVNVITTEAEAGAAVSPHRPSCSVTDTPPSVMVCINANSAMNPVFQGNGKLCINVLNHEQEEMARHFAGMTGMTMDDRFGLSGWQKGALGQPVLKGALASLEGEISQVQTIGSHLVYLVEIRNITLSQQGHGLIYFKRRFHPVMMEMDVVA.

The protein belongs to the non-flavoprotein flavin reductase family. HpaC subfamily. As to quaternary structure, homodimer. 4-HPA 3-monooxygenase consists of a reductase component HpaC and an oxygenase component HpaB.

It catalyses the reaction a reduced flavin + NAD(+) = an oxidized flavin + NADH + 2 H(+). Its pathway is aromatic compound metabolism; 4-hydroxyphenylacetate degradation; pyruvate and succinate semialdehyde from 4-hydroxyphenylacetate: step 1/7. In terms of biological role, catalyzes the reduction of free flavins (FMN, FAD and riboflavin) by NADH. Subsequently, the reduced flavins diffuse to the large HpaB component or to other electron acceptors such as cytochrome c and Fe(3+) ion. This is 4-hydroxyphenylacetate 3-monooxygenase reductase component (hpaC) from Klebsiella oxytoca.